Here is a 159-residue protein sequence, read N- to C-terminus: uncharacterized protein (159 aa).

Helical transmembrane passes span phenylalanine 10 to phenylalanine 30, methionine 52 to leucine 72, and leucine 96 to threonine 116.

Its subcellular location is the membrane. This is an uncharacterized protein from Escherichia coli (strain K12).